The chain runs to 136 residues: Phosphoribosyl-AMP cyclohydrolase (136 aa).

Residue Asp-92 participates in Mg(2+) binding. Zn(2+) is bound at residue Cys-93. Mg(2+) contacts are provided by Asp-94 and Asp-96. The Zn(2+) site is built by Cys-109 and Cys-116.

This sequence belongs to the PRA-CH family. As to quaternary structure, homodimer. Mg(2+) is required as a cofactor. It depends on Zn(2+) as a cofactor.

It localises to the cytoplasm. It carries out the reaction 1-(5-phospho-beta-D-ribosyl)-5'-AMP + H2O = 1-(5-phospho-beta-D-ribosyl)-5-[(5-phospho-beta-D-ribosylamino)methylideneamino]imidazole-4-carboxamide. It functions in the pathway amino-acid biosynthesis; L-histidine biosynthesis; L-histidine from 5-phospho-alpha-D-ribose 1-diphosphate: step 3/9. Its activity is regulated as follows. Reversibly inhibited by EDTA and free zinc ions. Enzyme is inactivated by dialysis against 1,10-phenanthroline, which is a zinc specific chelator. Its function is as follows. Catalyzes the hydrolysis of the adenine ring of phosphoribosyl-AMP. In Methanococcus vannielii, this protein is Phosphoribosyl-AMP cyclohydrolase.